The chain runs to 311 residues: Syndecan-1 (311 aa).

The first 22 residues, 1–22 (MRRAALWLWLCALALRLQPALL), serve as a signal peptide directing secretion. At 23 to 255 (HSVAVNMPPE…GLLDRKEVLG (233 aa)) the chain is on the extracellular side. Disordered stretches follow at residues 31–85 (PEDQ…PDAI) and 141–244 (TMAP…TGAS). Residues 32–42 (EDQDGSGDDSD) are compositionally biased toward acidic residues. An O-linked (Xyl...) (chondroitin sulfate) serine glycan is attached at serine 37. The N-linked (GlcNAc...) asparagine glycan is linked to asparagine 43. O-linked (Xyl...) (heparan sulfate) serine glycans are attached at residues serine 45 and serine 47. Over residues 71–84 (TTTATAPEPTSPDA) the composition is skewed to low complexity. 2 stretches are compositionally biased toward basic and acidic residues: residues 151-162 (PHRDVQPDHHET) and 169-180 (GRMEPHRPHVEE). O-linked (Xyl...) (chondroitin sulfate) serine glycosylation is found at serine 204 and serine 214. Residues 215 to 226 (GENAAGAAGEPG) are compositionally biased toward low complexity. Residues 256–276 (GVIAGGLVGLIFAVCLVGFML) traverse the membrane as a helical segment. Residues 277–311 (YRMKKKDEGSYSLEEPKQANGGAYQKPTKQEEFYA) are Cytoplasmic-facing. Positions 285–311 (GSYSLEEPKQANGGAYQKPTKQEEFYA) are disordered. Serine 286 is modified (phosphoserine).

It belongs to the syndecan proteoglycan family. Interacts with CDCP1. Interacts (via C-terminus) with TIAM1 (via PDZ domain). Interacts with MDK. Post-translationally, shedding is enhanced by a number of factors such as heparanase, thrombin or EGF. Also by stress and wound healing. PMA-mediated shedding is inhibited by TIMP3.

Its subcellular location is the membrane. The protein resides in the secreted. It localises to the extracellular exosome. In terms of biological role, cell surface proteoglycan that contains both heparan sulfate and chondroitin sulfate and that links the cytoskeleton to the interstitial matrix. Regulates exosome biogenesis in concert with SDCBP and PDCD6IP. Able to induce its own expression in dental mesenchymal cells and also in the neighboring dental epithelial cells via an MSX1-mediated pathway. This chain is Syndecan-1, found in Bos taurus (Bovine).